Reading from the N-terminus, the 256-residue chain is Acetyl-coenzyme A carboxylase carboxyl transferase subunit alpha (256 aa).

The CoA carboxyltransferase C-terminal domain occupies 1–236 (MTKITRIIKE…KEEIAAELDS (236 aa)).

Belongs to the AccA family. As to quaternary structure, acetyl-CoA carboxylase is a heterohexamer composed of biotin carboxyl carrier protein (AccB), biotin carboxylase (AccC) and two subunits each of ACCase subunit alpha (AccA) and ACCase subunit beta (AccD).

The protein resides in the cytoplasm. The catalysed reaction is N(6)-carboxybiotinyl-L-lysyl-[protein] + acetyl-CoA = N(6)-biotinyl-L-lysyl-[protein] + malonyl-CoA. It functions in the pathway lipid metabolism; malonyl-CoA biosynthesis; malonyl-CoA from acetyl-CoA: step 1/1. Component of the acetyl coenzyme A carboxylase (ACC) complex. First, biotin carboxylase catalyzes the carboxylation of biotin on its carrier protein (BCCP) and then the CO(2) group is transferred by the carboxyltransferase to acetyl-CoA to form malonyl-CoA. This is Acetyl-coenzyme A carboxylase carboxyl transferase subunit alpha from Streptococcus sanguinis (strain SK36).